The following is an 816-amino-acid chain: Phosphatidylinositol 4-kinase beta (816 aa).

Disordered stretches follow at residues 1 to 29 (MGDMVVEPATLKPTSEPTPSPSGNNGGSL), 99 to 121 (EEEDEMEPGVVSGTAKGTRRRRQ), and 250 to 318 (RKRE…SFSS). Gly2 is modified (N-acetylglycine). The segment at 2–68 (GDMVVEPATL…VKLLHGGVAI (67 aa)) is interaction with ACBD3. The span at 10 to 29 (TLKPTSEPTPSPSGNNGGSL) shows a compositional bias: low complexity. The PIK helical domain occupies 61 to 242 (LLHGGVAISS…GTKLRKLILS (182 aa)). Ser258 bears the Phosphoserine mark. A Phosphothreonine modification is found at Thr263. Ser266, Ser275, Ser277, Ser284, and Ser294 each carry phosphoserine. Composition is skewed to polar residues over residues 278-297 (DATASISLSSNLKRTASNPK) and 306-318 (SSSTESIDNSFSS). Phosphoserine is present on Ser428. At Thr438 the chain carries Phosphothreonine. Ser511 bears the Phosphoserine mark. Phosphothreonine occurs at positions 517 and 519. The PI3K/PI4K catalytic domain maps to 535–801 (EPWQEKVRRI…MVDGSMRSIT (267 aa)). Residues 541-547 (VRRIREG) form a G-loop region. The tract at residues 668–676 (QVKDRHNGN) is catalytic loop. Positions 687–711 (HIDFGFILSSSPRNLGFETSAFKLT) are activation loop.

Belongs to the PI3/PI4-kinase family. Type III PI4K subfamily. As to quaternary structure, interacts with ARF1 and ARF3 in the Golgi complex, but not with ARF4, ARF5 or ARF6. Interacts with NCS1/FREQ in a calcium-independent manner. Interacts with CALN1/CABP8 and CALN2/CABP7; in a calcium-dependent manner; this interaction competes with NCS1/FREQ binding. Interacts with ACBD3. Interacts with ARMH3, YWHAB, YWHAE, YWHAG, YWHAH, YWHAQ, YWHAZ and SFN. Interacts with GGA2 (via VHS domain); the interaction is important for PI4KB location at the Golgi apparatus membrane. Interacts with ATG9A. The cofactor is Mg(2+). Requires Mn(2+) as cofactor. Strongly expressed in brain, kidney, lung, small intestine, uterus and adrenal gland. Weaker expression in liver, heart, skeletal muscle, thymus and testis. Not detected in spleen.

It localises to the golgi apparatus. The protein localises to the endomembrane system. It is found in the mitochondrion outer membrane. The protein resides in the rough endoplasmic reticulum membrane. Its subcellular location is the golgi apparatus membrane. It carries out the reaction a 1,2-diacyl-sn-glycero-3-phospho-(1D-myo-inositol) + ATP = a 1,2-diacyl-sn-glycero-3-phospho-(1D-myo-inositol 4-phosphate) + ADP + H(+). Its activity is regulated as follows. Inhibited by wortmannin. Increased kinase activity upon interaction with NCS1/FREQ. In terms of biological role, phosphorylates phosphatidylinositol (PI) in the first committed step in the production of the second messenger inositol-1,4,5,-trisphosphate (PIP). May regulate Golgi disintegration/reorganization during mitosis, possibly via its phosphorylation. Involved in Golgi-to-plasma membrane trafficking. May play an important role in the inner ear development. This Rattus norvegicus (Rat) protein is Phosphatidylinositol 4-kinase beta (Pi4kb).